The sequence spans 811 residues: Phosphoinositide 3-kinase adapter protein 1 (811 aa).

Positions 8–146 constitute a TIR domain; sequence RGCDILIFYS…AVRKAISEDS (139 aa). The necessary and sufficient to mediate inhibition of NF-kappa-B downstream of activated TLRs; may mediate interaction with MYD88 and TIRAP stretch occupies residues 10–145; the sequence is CDILIFYSPD…AAVRKAISED (136 aa). Residues 146–169 form a disordered region; that stretch reads SGCDSVTDTEPEDERELPFSKQTN. One can recognise a DBB domain in the interval 182–318; it reads VQPDRIRCGA…NIPASGLHLF (137 aa). Tyr264 bears the Phosphotyrosine mark. Tyr420, Tyr445, and Tyr460 each carry phosphotyrosine; by SYK. Tyr513 is modified (phosphotyrosine; by ABL1). The interval 525 to 551 is disordered; the sequence is DLANRPPVPVPRPEASAPGPPPPPDNE. Over residues 530–550 the composition is skewed to pro residues; sequence PPVPVPRPEASAPGPPPPPDN. Phosphotyrosine; by ABL1 occurs at positions 553, 570, and 594. Ser642 bears the Phosphoserine mark. Position 694 is a phosphotyrosine; by ABL1 (Tyr694). The interval 702 to 811 is disordered; sequence VLPARTELRR…PPPPVPPRGR (110 aa). Residues 707–716 are compositionally biased toward basic and acidic residues; that stretch reads TELRRGDWKT. Residues 717–740 are compositionally biased toward low complexity; the sequence is DSMSSTASSTSNRSSTRSLLSVSS. Ser718 is modified (phosphoserine). Positions 801 to 811 are enriched in pro residues; the sequence is HPPPPVPPRGR.

Homooligomer. Interacts (phosphorylated on tyrosine residues within YXXM motifs) with PIK3R1 (via SH2 domain); required for BCR- and TLR-mediated activation of phosphoinositide 3-kinase. Interacts (via polyproline C-terminal region) with ABI1 (via SH3 domain); the interaction promotes phosphorylation of PIK3AP1 by ABL1. May interact with MYD88 and TIRAP. Post-translationally, constitutively phosphorylated. Phosphorylated on tyrosine residues in C-terminal region by ABL1. Phosphorylated on tyrosine residues within the YXXM motifs by BTK and SYK. Isoform 1 and isoform 2 are phosphorylated on tyrosine residues, most likely within the YXXM motifs, via CD19 activation. Toll-like receptor activation induces appearance of a phosphorylated form associated with membranes. Predominantly expressed in spleen (at protein level). Expressed at lower levels in thymus, liver and lung. Expressed in B-cells, macrophages and natural killer (NK) cells.

It is found in the cytoplasm. It localises to the cell membrane. In terms of biological role, signaling adapter that contributes to B-cell development by linking B-cell receptor (BCR) signaling to the phosphoinositide 3-kinase (PI3K)-Akt signaling pathway. Has a complementary role to the BCR coreceptor CD19, coupling BCR and PI3K activation by providing a docking site for the PI3K subunit PIK3R1. Alternatively, links Toll-like receptor (TLR) signaling to PI3K activation, a process preventing excessive inflammatory cytokine production. Also involved in the activation of PI3K in natural killer cells. May be involved in the survival of mature B-cells via activation of REL. The sequence is that of Phosphoinositide 3-kinase adapter protein 1 (Pik3ap1) from Mus musculus (Mouse).